The following is a 154-amino-acid chain: Pro-corazonin (154 aa).

The first 19 residues, 1-19 (MLRLLLLPLFLFTLSMCMG), serve as a signal peptide directing secretion. Pyrrolidone carboxylic acid is present on Gln-20. Asn-30 is subject to Asparagine amide. A propeptide spanning residues 70–154 (LERCLSQLQR…SAEPNVFGKH (85 aa)) is cleaved from the precursor. The tract at residues 91 to 119 (DFNANRVDPDPENSAHPRLSNSNGENVLY) is disordered. Positions 109–119 (LSNSNGENVLY) are enriched in polar residues.

This sequence belongs to the corazonin family. From late embryo to larva, expression is consistently detected in three neuronal groups: dorso-lateral neurons (DL), dorso-medial neurons (DM), and neurons in the ventral nerve cord (vCrz). Both the vCrz and DM groups die via programmed cell death during metamorphosis, whereas the DL neurons persist to adulthood. In adults, expression is seen in a cluster of six to eight neurons per lobe in the pars lateralis (DLP), in numerous neuronal cells in the optic lobes, and in a novel group of four abdominal ganglionic neurons present only in males (ms-aCrz). Projections of the ms-aCrz neurons terminate within the ventral nerve cord, implying a role as interneurons. Terminals of the DLP neurons are found in the retrocerebral complex that produces juvenile hormone and adipokinetic hormone, located in the vicinity of terminals emanating from PDF-containing pacemaking neurons.

It is found in the secreted. In terms of biological role, cardioactive peptide. Corazonin is probably involved in the physiological regulation of the heart beat. Clock (Clk) and cycle (cyc) proteins negatively regulate Crz transcription in a cell-specific manner. This Drosophila melanogaster (Fruit fly) protein is Pro-corazonin (Crz).